A 648-amino-acid chain; its full sequence is Translation factor GUF1 homolog, mitochondrial (648 aa).

A tr-type G domain is found at 55–247 (ERVRNFSIIA…AVIERIPSPP (193 aa)). GTP-binding positions include 64–71 (AHVDHGKS), 140–144 (DTPGH), and 194–197 (NKID).

The protein belongs to the TRAFAC class translation factor GTPase superfamily. Classic translation factor GTPase family. LepA subfamily.

It localises to the mitochondrion inner membrane. It catalyses the reaction GTP + H2O = GDP + phosphate + H(+). In terms of biological role, promotes mitochondrial protein synthesis. May act as a fidelity factor of the translation reaction, by catalyzing a one-codon backward translocation of tRNAs on improperly translocated ribosomes. Binds to mitochondrial ribosomes in a GTP-dependent manner. In Oryza sativa subsp. indica (Rice), this protein is Translation factor GUF1 homolog, mitochondrial.